The chain runs to 208 residues: Small ribosomal subunit protein uS4 (208 aa).

Positions 98 to 161 (RRLDNVIYRL…RKIPVIAEAQ (64 aa)) constitute an S4 RNA-binding domain.

It belongs to the universal ribosomal protein uS4 family. Part of the 30S ribosomal subunit. Contacts protein S5. The interaction surface between S4 and S5 is involved in control of translational fidelity.

Functionally, one of the primary rRNA binding proteins, it binds directly to 16S rRNA where it nucleates assembly of the body of the 30S subunit. Its function is as follows. With S5 and S12 plays an important role in translational accuracy. The protein is Small ribosomal subunit protein uS4 of Nitratidesulfovibrio vulgaris (strain DSM 19637 / Miyazaki F) (Desulfovibrio vulgaris).